A 192-amino-acid polypeptide reads, in one-letter code: MRIILLGPPGAGKGTQARMLMERYNISQLSTGDMLREAIEKETEIGKQAKIFIESGALVPDFVVNQIVSDRIGEGDCVSGFILDGYPRTVGQAEALQRILQSKNMQLNAVIELIVDEDALIERIKKRVEEVVAVGGKIRSDDNPDSFAKRLLEYREKTVPLSKFYSNIGLLKTVDGMADIADVSRAINAILE.

10–15 is a binding site for ATP; the sequence is GAGKGT. Residues 30–59 form an NMP region; that stretch reads STGDMLREAIEKETEIGKQAKIFIESGALV. AMP is bound by residues T31, R36, 57–59, 85–88, and Q92; these read ALV and GYPR. An LID region spans residues 126-142; that stretch reads KRVEEVVAVGGKIRSDD. R127 provides a ligand contact to ATP. AMP-binding residues include R139 and R150. ATP is bound at residue A178.

The protein belongs to the adenylate kinase family. As to quaternary structure, monomer.

The protein resides in the cytoplasm. The catalysed reaction is AMP + ATP = 2 ADP. The protein operates within purine metabolism; AMP biosynthesis via salvage pathway; AMP from ADP: step 1/1. Catalyzes the reversible transfer of the terminal phosphate group between ATP and AMP. Plays an important role in cellular energy homeostasis and in adenine nucleotide metabolism. This is Adenylate kinase from Bartonella bacilliformis (strain ATCC 35685 / KC583 / Herrer 020/F12,63).